Here is an 89-residue protein sequence, read N- to C-terminus: Gallinacin-13 (89 aa).

A signal peptide spans 1–23; sequence MRILQLLFAIVVILLLQDAPARG. 3 disulfides stabilise this stretch: Cys-30/Cys-58, Cys-37/Cys-51, and Cys-41/Cys-59. The segment at 66–89 is disordered; sequence PFSNPKHSVLHTAEQDPSPSLGGT.

Belongs to the beta-defensin family. Expressed in the liver, gall bladder, kidney, small intestine, spleen, testis, ovary and male and female reproductive tracts. Not detected in the ovarian stroma and the theca and granulosa layers of the ovarian follicle.

The protein localises to the secreted. The protein resides in the cytoplasmic granule. Its function is as follows. Has bactericidal activity. Potent activity against E.coli, L.monocytogenes, S.typhimurium and S.pyogenes but mot against S.aureus. Has bactericidal activity. This Gallus gallus (Chicken) protein is Gallinacin-13 (GAL13).